Consider the following 532-residue polypeptide: CTP synthase (532 aa).

Residues 1–267 (MTKYIFVTGG…DDIVLEHLQL (267 aa)) form an amidoligase domain region. Ser-13 serves as a coordination point for CTP. Ser-13 provides a ligand contact to UTP. ATP is bound at residue 14–19 (SIGKGI). Position 54 (Tyr-54) interacts with L-glutamine. Residue Asp-71 coordinates ATP. Asp-71 and Glu-141 together coordinate Mg(2+). Residues 148–150 (DIE), 188–193 (KTKPTQ), and Lys-224 each bind CTP. UTP is bound by residues 188 to 193 (KTKPTQ) and Lys-224. Residues 292 to 532 (RIGLVGKYVS…DFVGAALKNK (241 aa)) form the Glutamine amidotransferase type-1 domain. Gly-354 contributes to the L-glutamine binding site. Cys-381 functions as the Nucleophile; for glutamine hydrolysis in the catalytic mechanism. L-glutamine is bound by residues 382 to 385 (LGMQ), Glu-405, and Arg-462. Residues His-507 and Glu-509 contribute to the active site.

The protein belongs to the CTP synthase family. As to quaternary structure, homotetramer.

It carries out the reaction UTP + L-glutamine + ATP + H2O = CTP + L-glutamate + ADP + phosphate + 2 H(+). The catalysed reaction is L-glutamine + H2O = L-glutamate + NH4(+). The enzyme catalyses UTP + NH4(+) + ATP = CTP + ADP + phosphate + 2 H(+). The protein operates within pyrimidine metabolism; CTP biosynthesis via de novo pathway; CTP from UDP: step 2/2. Its activity is regulated as follows. Allosterically activated by GTP, when glutamine is the substrate; GTP has no effect on the reaction when ammonia is the substrate. The allosteric effector GTP functions by stabilizing the protein conformation that binds the tetrahedral intermediate(s) formed during glutamine hydrolysis. Inhibited by the product CTP, via allosteric rather than competitive inhibition. Catalyzes the ATP-dependent amination of UTP to CTP with either L-glutamine or ammonia as the source of nitrogen. Regulates intracellular CTP levels through interactions with the four ribonucleotide triphosphates. This is CTP synthase from Listeria monocytogenes serovar 1/2a (strain ATCC BAA-679 / EGD-e).